The following is a 237-amino-acid chain: tRNA-splicing endonuclease subunit Sen2-1 (237 aa).

Residues Y148, H156, and K190 contribute to the active site.

The protein belongs to the tRNA-intron endonuclease family. As to quaternary structure, tRNA splicing endonuclease is a heterotetramer composed of SEN2, SEN15, SEN34/LENG5 and SEN54.

It localises to the nucleus. The enzyme catalyses pretRNA = a 3'-half-tRNA molecule with a 5'-OH end + a 5'-half-tRNA molecule with a 2',3'-cyclic phosphate end + an intron with a 2',3'-cyclic phosphate and a 5'-hydroxyl terminus.. Its function is as follows. Constitutes one of the two catalytic subunit of the tRNA-splicing endonuclease complex, a complex responsible for identification and cleavage of the splice sites in pre-tRNA. It cleaves pre-tRNA at the 5'- and 3'-splice sites to release the intron. The products are an intron and two tRNA half-molecules bearing 2',3'-cyclic phosphate and 5'-OH termini. There are no conserved sequences at the splice sites, but the intron is invariably located at the same site in the gene, placing the splice sites an invariant distance from the constant structural features of the tRNA body. Probably carries the active site for 5'-splice site cleavage. The protein is tRNA-splicing endonuclease subunit Sen2-1 (SEN1) of Arabidopsis thaliana (Mouse-ear cress).